Reading from the N-terminus, the 346-residue chain is MAVPPVTELTDRARAIFQLVVEGYLESGQPVGSKTLSQEQSLDLSPASIRSVLADLESIGLLAAPHTSAGRMPTETGLRLFVDGMMQVAEPTRAEREAIAQRLKRSGPIEQALEATSSMLSDLSGAAGMVMVPSREPRLAQISLVPLGQGKALAVLVGEDGAIENRVIETGDTPAHVLEQVSNFITARLAGRTLAEATAAMRKEIADGKSALDTASQNLVERGLAVWTEDAAERPVLIVRGQANLLDESALEDLDRVRSLLDDLENKQSVAELLETARDAEATRIFIGSENRLFALSGSSVIASPYRDREGKVVGVLGVIGPTRLNYARVVPMVDFTARSLGKLIG.

This sequence belongs to the HrcA family.

Negative regulator of class I heat shock genes (grpE-dnaK-dnaJ and groELS operons). Prevents heat-shock induction of these operons. The polypeptide is Heat-inducible transcription repressor HrcA (Erythrobacter litoralis (strain HTCC2594)).